The sequence spans 534 residues: Nuclear polyadenylated RNA-binding protein 4 (534 aa).

The interval 1-154 (MSSDEEDFND…TKEERSKADL (154 aa)) is disordered. 2 positions are modified to phosphoserine: serine 2 and serine 3. Residues 13-30 (GDDKPTTTEEVKKEEEQN) are compositionally biased toward basic and acidic residues. A compositionally biased stretch (low complexity) spans 37–78 (SQLDQLAALQALSSSLNKLNNPNSNNSSSNNSNQDTSSSKQD). Phosphoserine occurs at positions 51 and 87. Basic and acidic residues predominate over residues 81–98 (ANDKEGSNEDTKNEKKQE). Low complexity-rich tracts occupy residues 99-112 (SATS…ASSA) and 121-144 (QLQQ…QVTQ). Residues 145–154 (TKEERSKADL) are compositionally biased toward basic and acidic residues. RRM domains are found at residues 159–241 (CKMF…EQDK) and 243–320 (GKIF…RAEP). Serine 206 is modified (phosphoserine). Disordered regions lie at residues 316-354 (KRAE…DFNQ) and 415-534 (MPPN…PYNR). The span at 336–354 (GNNMNRRGGNFGNQGDFNQ) shows a compositional bias: low complexity. Residues 420 to 459 (MTLNQPQQDSNATQGSPAPSDSDNNKSNDVQTIGNTSNTD) are compositionally biased toward polar residues. Residue threonine 458 is modified to Phosphothreonine. Residues serine 460 and serine 462 each carry the phosphoserine modification. Residues 460–475 (SGSPPLNLPNGPKGPS) are compositionally biased toward low complexity. Basic and acidic residues predominate over residues 478–505 (NDDHNSGYGYNRDRGDRDRNDRDRDYNH). Arginine 519 bears the Omega-N-methylarginine mark. Low complexity predominate over residues 523–534 (NRRNNGYHPYNR).

As to quaternary structure, interacts with NAM7. Methylated by HMT1. The methylation is required for nuclear export.

The protein localises to the cytoplasm. It is found in the nucleus. Its subcellular location is the stress granule. Functionally, RNA-binding protein, which is involved in the polyadenylation-dependent pre-mRNA 3'-end formation and cooperates with the cleavage factor CFIA complex and the cleavage and polyadenylation factor (CPF) complex. May be involved in regulation of poly(A) site selection. Is involved in nonsense-mediated mRNA decay. Seems to bind to an RNA downstream sequence element (DSE) located 3' of a nonsense codon and may mark the transcript for decay. This is Nuclear polyadenylated RNA-binding protein 4 from Saccharomyces cerevisiae (strain ATCC 204508 / S288c) (Baker's yeast).